Reading from the N-terminus, the 661-residue chain is L-type lectin-domain containing receptor kinase V.5 (661 aa).

The first 25 residues, 1-25, serve as a signal peptide directing secretion; sequence MSRELIILCQPILVLFLTLFYNSHG. Topologically, residues 26–282 are extracellular; it reads YFVSQGSVGI…KTSNRTKTVL (257 aa). Residues 30–250 form a legume-lectin like region; sequence QGSVGIGFNG…GAIHYLMGWL (221 aa). 5 N-linked (GlcNAc...) asparagine glycosylation sites follow: Asn45, Asn64, Asn116, Asn198, and Asn276. A helical membrane pass occupies residues 283 to 303; the sequence is AVCLTVSVFAAFVASWIGFVF. The Cytoplasmic portion of the chain corresponds to 304–661; that stretch reads YLRHKKVKEV…TDSSFVSHGR (358 aa). One can recognise a Protein kinase domain in the interval 338–596; it reads FKEKQLLGKG…LGVLCSHQAA (259 aa). ATP is bound by residues 344–352 and Lys367; that span reads LGKGGFGQV. The active-site Proton acceptor is Asp464.

This sequence in the C-terminal section; belongs to the protein kinase superfamily. Ser/Thr protein kinase family. In the N-terminal section; belongs to the leguminous lectin family. In terms of processing, autophosphorylated on a Ser residue. In terms of tissue distribution, expressed at low levels in stems, leaves, flowers and siliques.

The protein resides in the cell membrane. The catalysed reaction is L-seryl-[protein] + ATP = O-phospho-L-seryl-[protein] + ADP + H(+). It carries out the reaction L-threonyl-[protein] + ATP = O-phospho-L-threonyl-[protein] + ADP + H(+). In terms of biological role, confers resistance to the pathogenic oomycetes Phytophthora infestans and Phytophthora capsici, but confers susceptibility to the pathogenic bacteria Pseudomonas syringae. The chain is L-type lectin-domain containing receptor kinase V.5 from Arabidopsis thaliana (Mouse-ear cress).